A 551-amino-acid polypeptide reads, in one-letter code: Solute carrier family 22 member 4 (551 aa).

The Cytoplasmic portion of the chain corresponds to M1–L20. A helical transmembrane segment spans residues I21 to F41. The Extracellular portion of the chain corresponds to L42–K141. N-linked (GlcNAc...) asparagine glycosylation is found at N57, N64, and N91. A helical transmembrane segment spans residues V142 to Q162. Over L163 to N171 the chain is Cytoplasmic. A helical membrane pass occupies residues V172–S192. Residues W193–T197 lie on the Extracellular side of the membrane. The helical transmembrane segment at V198–G218 threads the bilayer. Residue G218–S225 coordinates ATP. Over T219–T232 the chain is Cytoplasmic. Residues L233 to I253 traverse the membrane as a helical segment. The Extracellular portion of the chain corresponds to R254–R257. Residues M258–P278 form a helical membrane-spanning segment. The Cytoplasmic segment spans residues E279 to N337. The chain crosses the membrane as a helical span at residues I338–A358. Residues L359 to Y371 lie on the Extracellular side of the membrane. A helical membrane pass occupies residues L372–L392. Topologically, residues R393–Y399 are cytoplasmic. A helical membrane pass occupies residues I400–V420. The Extracellular segment spans residues D421–S426. Residues I427 to F447 form a helical membrane-spanning segment. At T448 to A460 the chain is on the cytoplasmic side. Residues V461 to L481 traverse the membrane as a helical segment. Over G482 to R486 the chain is Extracellular. The helical transmembrane segment at M487–F507 threads the bilayer. The Cytoplasmic portion of the chain corresponds to P508 to F551.

Belongs to the major facilitator (TC 2.A.1) superfamily. Organic cation transporter (TC 2.A.1.19) family. In terms of assembly, interacts with PDZK1.

It localises to the apical cell membrane. It is found in the basal cell membrane. The protein localises to the mitochondrion membrane. It carries out the reaction ergothioneine(out) + Na(+)(out) = ergothioneine(in) + Na(+)(in). The enzyme catalyses acetylcholine(in) = acetylcholine(out). The catalysed reaction is (R)-carnitine(out) + Na(+)(out) = (R)-carnitine(in) + Na(+)(in). It catalyses the reaction glycine betaine(out) + Na(+)(out) = glycine betaine(in) + Na(+)(in). Its activity is regulated as follows. Allosterically activated by intracellular ATP. In terms of biological role, transporter that mediates the transport of endogenous and microbial zwitterions and organic cations. Functions as a Na(+)-dependent and pH-dependent high affinity microbial symporter of potent food-derived antioxidant ergothioeine. Transports one sodium ion with one ergothioeine molecule. Involved in the absorption of ergothioneine from the luminal/apical side of the small intestine and renal tubular cells, and into non-parenchymal liver cells, thereby contributing to maintain steady-state ergothioneine level in the body. Also mediates the bidirectional transport of acetycholine, although the exact transport mechanism has not been fully identified yet. Most likely exports anti-inflammatory acetylcholine in non-neuronal tissues, thereby contributing to the non-neuronal cholinergic system. Displays a general physiological role linked to better survival by controlling inflammation and oxidative stress, which may be related to ergothioneine and acetycholine transports. May also function as a low-affinity Na(+)-dependent transporter of L-carnitine through the mitochondrial membrane, thereby maintaining intracellular carnitine homeostasis. May contribute to regulate the transport of cationic compounds in testis across the blood-testis-barrier. The sequence is that of Solute carrier family 22 member 4 (SLC22A4) from Papio anubis (Olive baboon).